Reading from the N-terminus, the 251-residue chain is Aspartate/glutamate leucyltransferase (251 aa).

It belongs to the R-transferase family. Bpt subfamily.

It is found in the cytoplasm. The enzyme catalyses N-terminal L-glutamyl-[protein] + L-leucyl-tRNA(Leu) = N-terminal L-leucyl-L-glutamyl-[protein] + tRNA(Leu) + H(+). The catalysed reaction is N-terminal L-aspartyl-[protein] + L-leucyl-tRNA(Leu) = N-terminal L-leucyl-L-aspartyl-[protein] + tRNA(Leu) + H(+). Its function is as follows. Functions in the N-end rule pathway of protein degradation where it conjugates Leu from its aminoacyl-tRNA to the N-termini of proteins containing an N-terminal aspartate or glutamate. The sequence is that of Aspartate/glutamate leucyltransferase from Nitrosospira multiformis (strain ATCC 25196 / NCIMB 11849 / C 71).